Reading from the N-terminus, the 444-residue chain is Gustatory receptor 5a for trehalose (444 aa).

Residues 1 to 56 lie on the Cytoplasmic side of the membrane; sequence MRQLKGRNRCNRAVRHLKIQGKMWLKNLKSGLEQIRESQVRGTRKNFLHDGSFHEA. The chain crosses the membrane as a helical span at residues 57–77; sequence VAPVLAVAQCFCLMPVCGISA. Over 78 to 178 the chain is Extracellular; that stretch reads PTYRGLSFNR…RARPARRLKL (101 aa). The chain crosses the membrane as a helical span at residues 179-199; that stretch reads VAFVLLVVSLMEHLLSIISVV. Topologically, residues 200 to 214 are cytoplasmic; it reads YYDFCPRRSDPVESY. The chain crosses the membrane as a helical span at residues 215-235; sequence LLGASAQLFEVFPYSNWLAWL. Residues 236-240 lie on the Extracellular side of the membrane; the sequence is GKIQN. A helical membrane pass occupies residues 241–261; the sequence is VLLTFGWSYMDIFLMMLGMGL. The Cytoplasmic segment spans residues 262-305; the sequence is SEMLARLNRSLEQQVRQPMPEAYWTWSRTLYRSIVELIREVDDA. The chain crosses the membrane as a helical span at residues 306-326; sequence VSGIMLISFGSNLYFICLQLL. Residues 327–338 lie on the Extracellular side of the membrane; sequence KSINTMPSSAHA. A helical membrane pass occupies residues 339-359; it reads VYFYFSLLFLLSRSTAVLLFV. The Cytoplasmic portion of the chain corresponds to 360–410; that stretch reads SAINDQAREPLRLLRLVPLKGYHPEVFRFAAELASDQVALTGLKFFNVTRK. Residues 411–431 traverse the membrane as a helical segment; that stretch reads LFLAMAGTVATYELVLIQFHE. The Extracellular segment spans residues 432 to 444; that stretch reads DKKTWDCSPFNLD.

Belongs to the insect chemoreceptor superfamily. Gustatory receptor (GR) family. Gr5a subfamily. In terms of tissue distribution, expressed in labellar chemosensory neurons.

It localises to the cell membrane. In terms of biological role, gustatory receptor required for response to the sugar trehalose in taste neurons. Gr5a neurons selectively respond to sugars, in contrast to Gr66a cells which respond to bitter compounds. Flies are attracted to sugars and avoid bitter substances, suggesting that Gr5a neuron activity is sufficient to mediate acceptance behavior. Sugar signal transduction occurs through coupling with G-proteins such as Galpha49B and G-salpha60A. The polypeptide is Gustatory receptor 5a for trehalose (Gr5a) (Drosophila melanogaster (Fruit fly)).